The following is a 429-amino-acid chain: Protein phosphatase 2C homolog 2 (429 aa).

The region spanning 16–291 (LYGLSAMQGW…DNMTMIIIGL (276 aa)) is the PPM-type phosphatase domain. Residues Asp-64, Gly-65, Asp-233, and Asp-282 each coordinate Mn(2+). Disordered regions lie at residues 320 to 348 (YGKS…NDRS) and 384 to 429 (RDVT…SASS). Residues 384–397 (RDVTNHLQHDKAEE) are compositionally biased toward basic and acidic residues. Residues 405 to 419 (SESPSSANKNSSGSG) are compositionally biased toward low complexity.

Belongs to the PP2C family. The cofactor is Mg(2+). Mn(2+) is required as a cofactor.

Its subcellular location is the cytoplasm. It localises to the nucleus. The catalysed reaction is O-phospho-L-seryl-[protein] + H2O = L-seryl-[protein] + phosphate. It carries out the reaction O-phospho-L-threonyl-[protein] + H2O = L-threonyl-[protein] + phosphate. In terms of biological role, dephosphorylating regulator for many key proteins. Dephosphorylates sakA, to negatively regulate the stress-activated p38MAPK cascade. This Aspergillus fumigatus (strain ATCC MYA-4609 / CBS 101355 / FGSC A1100 / Af293) (Neosartorya fumigata) protein is Protein phosphatase 2C homolog 2.